Consider the following 255-residue polypeptide: MTQTSSLWVGVISLFPDMFDAITDQGVTGRAVKSGLIDFNCWNPRDYALDKHRTVDDRPYGGGPGMLMMVEPLKKAIAEAKKAAGDGAKVIYMSPQGRKLDQQGASELASSKKLILIAGRYEGIDERIIESYVDEEWSIGDFILSGGELPAMTLIDAVARLVPGVLGHNQSAEQDSFSDGLLDCPHYTRPETLDDKQVPAVLLSGNHQEIAKWRLMQSLGRTWLRRPDLLHNLALTEEQAVLLAKFQQEYQKACG.

S-adenosyl-L-methionine is bound by residues glycine 119 and 139–144 (IGDFIL).

It belongs to the RNA methyltransferase TrmD family. Homodimer.

The protein resides in the cytoplasm. The catalysed reaction is guanosine(37) in tRNA + S-adenosyl-L-methionine = N(1)-methylguanosine(37) in tRNA + S-adenosyl-L-homocysteine + H(+). In terms of biological role, specifically methylates guanosine-37 in various tRNAs. The polypeptide is tRNA (guanine-N(1)-)-methyltransferase (Pseudoalteromonas translucida (strain TAC 125)).